Consider the following 542-residue polypeptide: Signal peptide peptidase-like 5 (542 aa).

The signal sequence occupies residues 1 to 23 (MAAATAAVFALLMASALAGAAAG). Residues 24–192 (GDIVHHDDEA…PDRPVVDTAE (169 aa)) are Lumenal-facing. Residues Asn79 and Asn145 are each glycosylated (N-linked (GlcNAc...) asparagine). Residues 92-167 (CTSPKEKVSG…LPRDAGFALH (76 aa)) enclose the PA domain. Residues 193-213 (VFLWLMAVGTVLCASYWSAWS) form a helical membrane-spanning segment. Over 214–245 (AREALCEQEKLLKDGREVLLNVENGSSSGMID) the chain is Cytoplasmic. Residues 246 to 266 (INVASAIMFVVVASCFLIMLY) traverse the membrane as a helical segment. At 267–275 (KMMSSWFVE) the chain is on the lumenal side. Residues 276-296 (LLVVIFCVGGVEGLQTCLVAL) traverse the membrane as a helical segment. The Cytoplasmic portion of the chain corresponds to 297–316 (LSRWFRAASESFFKVPFFGA). The chain crosses the membrane as a helical span at residues 317–337 (VSYLTLAVSPFCIVFAVLWAV). Residues 338–342 (HRHFT) are Lumenal-facing. The chain crosses the membrane as a helical span at residues 343–363 (YAWIGQDILGIALIITVIQIV). The Cytoplasmic portion of the chain corresponds to 364-367 (RVPN). Residues 368 to 388 (LKVGSVLLSCAFFYDIFWVFV) form a helical membrane-spanning segment. The active site involves Asp382. Topologically, residues 389–426 (SKRWFHESVMIVVARGDKTDEDGVPMLLKIPRMFDPWG) are lumenal. The chain crosses the membrane as a helical span at residues 427–447 (GYSIIGFGDILLPGLLVAFAL). Asp435 is a catalytic residue. The Cytoplasmic segment spans residues 448 to 459 (RYDWAAKKSLQT). A helical membrane pass occupies residues 460 to 480 (GYFLWSMVAYGSGLLITYVAL). The Lumenal segment spans residues 481–486 (NLMDGH). A helical transmembrane segment spans residues 487–507 (GQPALLYIVPFTLGALISLGW). The short motif at 489–491 (PAL) is the PAL element. Residues 508–542 (KRGELWNLWSKGEPERVCPHHMHMQPQPKTPPLVQ) lie on the Cytoplasmic side of the membrane.

This sequence belongs to the peptidase A22B family. Post-translationally, glycosylated.

The protein localises to the endosome membrane. Functionally, intramembrane-cleaving aspartic protease (I-CLiP) that cleaves type II membrane signal peptides in the hydrophobic plane of the membrane. This is Signal peptide peptidase-like 5 (SPPL5) from Oryza sativa subsp. japonica (Rice).